Consider the following 547-residue polypeptide: CTP synthase (547 aa).

Residues 1-265 are amidoligase domain; that stretch reads MTKFVFVTGG…DRIVCEKLAL (265 aa). Serine 13 provides a ligand contact to CTP. Serine 13 lines the UTP pocket. Residues 14–19 and aspartate 71 each bind ATP; that span reads SLGKGI. Mg(2+) contacts are provided by aspartate 71 and glutamate 139. CTP is bound by residues 146-148, 186-191, and lysine 222; these read DIE and KTKPTQ. Residues 186-191 and lysine 222 contribute to the UTP site; that span reads KTKPTQ. The Glutamine amidotransferase type-1 domain maps to 290 to 542; sequence TIGMVGKYVD…IKAALAHKHA (253 aa). Glycine 351 provides a ligand contact to L-glutamine. The active-site Nucleophile; for glutamine hydrolysis is the cysteine 378. Residues 379 to 382, glutamate 402, and arginine 468 each bind L-glutamine; that span reads LGMQ. Residues histidine 515 and glutamate 517 contribute to the active site.

Belongs to the CTP synthase family. Homotetramer.

It catalyses the reaction UTP + L-glutamine + ATP + H2O = CTP + L-glutamate + ADP + phosphate + 2 H(+). The catalysed reaction is L-glutamine + H2O = L-glutamate + NH4(+). The enzyme catalyses UTP + NH4(+) + ATP = CTP + ADP + phosphate + 2 H(+). It functions in the pathway pyrimidine metabolism; CTP biosynthesis via de novo pathway; CTP from UDP: step 2/2. Allosterically activated by GTP, when glutamine is the substrate; GTP has no effect on the reaction when ammonia is the substrate. The allosteric effector GTP functions by stabilizing the protein conformation that binds the tetrahedral intermediate(s) formed during glutamine hydrolysis. Inhibited by the product CTP, via allosteric rather than competitive inhibition. Its function is as follows. Catalyzes the ATP-dependent amination of UTP to CTP with either L-glutamine or ammonia as the source of nitrogen. Regulates intracellular CTP levels through interactions with the four ribonucleotide triphosphates. The protein is CTP synthase of Janthinobacterium sp. (strain Marseille) (Minibacterium massiliensis).